A 475-amino-acid polypeptide reads, in one-letter code: D-lactate dehydrogenase (475 aa).

The region spanning 43–222 (YGKARPEVLV…TELTLKVIPA (180 aa)) is the FAD-binding PCMH-type domain.

This sequence belongs to the FAD-binding oxidoreductase/transferase type 4 family. It depends on FAD as a cofactor. Zn(2+) serves as cofactor.

The enzyme catalyses (R)-lactate + A = pyruvate + AH2. In terms of biological role, catalyzes the dehydrogenation of (R)-lactate (D-lactate) to pyruvate. Active in vitro with the artificial electron acceptor 2,6-dichlorophenolindophenol (DCPIP), but not with NAD, NADP, or cytochrome c. Also displays a very low oxidase activity in vitro on D-lactate and L-lactate with O2 as the electron acceptor, but this activity is most likely not physiological. This Anaerostipes hadrus protein is D-lactate dehydrogenase.